A 93-amino-acid chain; its full sequence is Alpha-defensin 13 (93 aa).

Positions 1–19 (MKTLVLLSALVLLAFQVQA) are cleaved as a signal peptide. Residues 20–58 (DPIQNTDEETKTEEQPGEEDQAVSVSFGDPEGTSLQEES) constitute a propeptide that is removed on maturation. Residues 22-54 (IQNTDEETKTEEQPGEEDQAVSVSFGDPEGTSL) are disordered. Cystine bridges form between Cys-64–Cys-92, Cys-66–Cys-81, and Cys-71–Cys-91.

This sequence belongs to the alpha-defensin family. In terms of tissue distribution, paneth cells of the small bowel.

It is found in the secreted. Its function is as follows. Probably contributes to the antimicrobial barrier function of the small bowel mucosa. In Mus musculus (Mouse), this protein is Alpha-defensin 13 (Defa13).